The sequence spans 312 residues: Olfactory receptor 6X1 (312 aa).

The Extracellular portion of the chain corresponds to 1 to 23; the sequence is MRNGTVITEFILLGFPVIQGLQT. N-linked (GlcNAc...) asparagine glycosylation is present at Asn3. Residues 24–44 traverse the membrane as a helical segment; sequence PLFIAIFLTYILTLAGNGLII. Over 45–52 the chain is Cytoplasmic; the sequence is ATVWAEPR. A helical membrane pass occupies residues 53–73; sequence LQIPMYFFLCNLSFLEIWYTT. Residues 74–97 are Extracellular-facing; it reads TVIPKLLGTFVVARTVICMSCCLL. Cys95 and Cys187 are disulfide-bonded. Residues 98 to 118 traverse the membrane as a helical segment; it reads QAFFHFFVGTTEFLILTIMSF. At 119–137 the chain is on the cytoplasmic side; the sequence is DRYLTICNPLHHPTIMTSK. A helical membrane pass occupies residues 138–158; that stretch reads LCLQLALSSWVVGFTIVFCQT. At 159-195 the chain is on the extracellular side; the sequence is MLLIQLPFCGNNVISHFYCDVGPSLKAACIDTSILEL. A helical transmembrane segment spans residues 196–215; sequence LGVIATILVIPGSLLFNMIS. The Cytoplasmic portion of the chain corresponds to 216-235; sequence YIYILSAILRIPSATGHQKT. Residues 236–256 form a helical membrane-spanning segment; that stretch reads FSTCASHLTVVSLLYGAVLFM. Over 257-269 the chain is Extracellular; sequence YLRPTAHSSFKIN. A helical membrane pass occupies residues 270 to 290; that stretch reads KVVSVLNTILTPLLNPFIYTI. Topologically, residues 291-312 are cytoplasmic; the sequence is RNKEVKGALRKAMTCPKTGHAK.

It belongs to the G-protein coupled receptor 1 family.

It is found in the cell membrane. Its function is as follows. Odorant receptor. This chain is Olfactory receptor 6X1 (OR6X1), found in Homo sapiens (Human).